The sequence spans 4144 residues: MFSSSQIPRVFLIPSRRELRLVLQLQESLSAGDRCSAAMASYQLTRGLGQECVLSSDPAVLALQTSLVFSKDFGLLVFVRKSLSIDEFRDCREEVLKFLYIFLEKIGQKITPYSLDIKTTCTSVYTKDKAAKCKIPALDLLIKLLQTLRSSRLMDEFSIGELFNKFYGELALKTKIQDTVLEKIYELLGVLAEVHPSEMINNSEKLFRAFLGELKIQMTSAIREPKLPVLAGCLKGLSSLMCNFTKSMEEDPQTSREIFDFALKAIRPQIDLKRYAVPLAGLCLFTLHASQFSTCLLDNYVSLFEVLSKWCSHTNVEMKKAAHSALESFLKQVSFMVAKDAEMHKSKLQYFMEQFYGIIRNMDSNSKDLSIAIRGYGLFAGPCKVINAKDVDFMYIELIQRCKQLFLTQIDTVDDHVYHMPSFLQSIASVLLYLDRVPEVYTPVLEHLMVAQIDSFPQYSPKMQSVCCKALVKVFLALGGKGPVLWNCISTVVHQGLIRICSKPVILQKGVESEPEEYRASGEVRTGKWKVPTYKDYLDLFRSLLSCDQMMDSLLADEAFLFVNSSLQNLNRLLYDEFVKSVLKIIEKLDLTLEKRNVGEHEDENEATGVWVIPTSDPAANLHPAKPKDFSAFINLVEFCRDILPEKHIEFFEPWVYSFAYELILQSTRLPLISGFYKLLSVAVRNAKKIKYFEGVGMKSQTQAPKDPEKYSCFALFAKFGKEVTVKMKQYKDELLASCLTFILSLPHDIIELDIRAYIPALQMAFKLGLSYTPLAEVGLNALEEWSVCICKHIIQPHYKDILPSLDGYLKTSALSDETKNSWEVSAPSQAAQKGFNQVVLKHLKKTKNISSNEALSLEEIRIRVVQMLGFLGGQINKNLLTATSSDEMMKKCVAWDREKRLSFAVPFIEMKPVIYLDVFLPRVTELALSASDRQTKVAACELLHSMVMFTLGKATQMPECGQGFPPMYQLYKRTFPALLRLACDVDQVTRQLYEPLVMQLIHWFTNNKKFESQDTVALLETILDGIVDPVDSTLRDFCGRCIREFLKWSIKQTTPQQQEKSPVNTKSLFKRLYSFALHPNAFKRLGASLAFNNIYREFREEESLVEQFVFEALVTYLESLALAHTDEKPLGTIRQCCDAIDHLRHIIEKKHVSLNKVKKRRRPRGFPPSASLCLLDMVQWLLAHCGRPQTECRHKSIELFYKFVPLLPGNKSPSLWLKDILKNKDTSFLINTFEGGGGSCDRPSGILVQPTLFHLQGPFSLRAALQWMDMLLAALECYNTFIEEKTLKAPDVLGTETQSSLWKAVAFFLDNIAMHDITAAEKCFGTGAAGHRPSPQEGERYNYSKCTIVVRIMEFTTTLLNTSPDGWKLLEEDLCNNKNFMTLLVKILCQPSSIGFNIGDVLVMNHLPDVCVNLMKALKKSPYKDTLEMCLKEKITVQSIEELCAVDLYGPDAYVDRATLASVVSACKQLHRAGVLHVVLPSQSADQRHSVGIKLLFLVYKSIAPGDEREYFPSLDPSCKRLASGLLELAFAFGGLCEHLVDLLLDTAVLSMPASGESQRNMVSFSHGEYFYSLFSEIINTELLRNLDMTVLKLMKSSVDNPKMVSAILNGMLDQSFRDRASRKQQGLKLASTILHNWKKWDSWWAKDSAPESKTAVLTLLAKILQIDSSVSFNTNHSAFPEVFTTYTSLLADSNLGLHLMGQAVILLPFFTNLTGGNLEDLEHVLEKLIVSNFPMKSEEFPVGTLRYSNYVDCMKKFLDALELSQSPVLLQLMAEILCREQQHVMEELFQSTFKKIARKSSCVTQLALLESVYRMFKRDDLLSNVTRQAFVDRSLLTLLWHCGLNALREFFGKIVVETIDVLKSRFTKLNESTFDTQITKKMGFYKMLDVMYSRLSKDDVHSKESKINQVFHGSCITEGNELTKTLIKLCYDAFTENMAGENQLLERRRLYHCAAYNCAISVICCVFTELKFYQGFLFSEKPEKNLLILENLIDLKRCYTFPIEVEVPMERRKKYIEIRKEAREAVNGDSDGPHYLSSLSYLADSSLSEEMSQFDFSTGVQSYSYGSQDPKSTHGHFRRREHKDPMVQDAVLELEMDELNQHECMATMTALIKHMQRNQILSKDEGSVPRNLPPWMKFLHDKLGNPSVSLNIRLFLAKLVINTEEVFRPYAKYWLSPLLQLVVSENNGGEGIHYMVVEIVVTVLSWTGLATPVGVPKDEVLANRLLHFLMEHVFHQKRAVFRHNLEIIKTLVECWKDCLSVPYRLIFEKFSSKDPNSKDNSVGIQLLGIVMANNLPPYDPKCGIERIKYFEALVSNMSFVKYKEVYAAAAEVLGLTLRYITERENILENVVYELVIKQLKQHQNTMEDKFIVCLNKVVKNFPPLADRFMNAVFFLLPKFHGVMKTLCLEVVLCRAEEITNIYLELKSKDFIQVMRHRDDERQKVCLDIIYKMMAKLKPVELRDLLNSVVEFISHPSPVCREQMYNILMWIHDNYRDPESQADDDSREVFKLAKDVLIQGLIDENAGLQLIIRNFWSHETRLPSNTLDRLLALNSLYSPKIEVHFLSLATDFLLEMTSLSPDYANPVFEHPLSECEFQEYTIDSDWRFRSTVLTPMFIETQASQSTLQTRTQERSLPAQGVMARQIRATQQQYDFTPTQTADGRSSFNWLTGSSIDPLVDYTVSSSDSSSSSLLFAQKRNEKSQRAPLKSVGPDFGEKKLGLPGDKVDNKAKGIDNRTEILRLRRRFIKDQEKLSLIYARKGIAEQKREKEIKSELKMKHDAQVILYRSYRQGDLPDIQIKYSSLVTPLQAVAQRDPVVAKQLFGSLFSGIIKEMDKYKTMSEKNNITQKLLQDFSHFLNSTFSFFPPFVSCIQEISCQHTDLLSLDPGSIRASCLASLQQPVGVRLLEEALLHLGPQEPPAKQFKGRMRVSPDVVRWMELAKLYRSIGEYDILRGIFSSEIGTKQITQSAIFAEARSDYSEAAKQYNEALNKEEWVDGEPTEAEKDFWELASLDCYNQLAEWKSLAYCSIVSVDNENPPDLNKMWSEPFYRETYLPYMIRSKLKLLLQGEADQSLLTFIDEAVNKDLQKALIELHYSQELSLLYILQDDIDRAKYYIENCIQIFMQNYSSIDVLLHRSRLTKLQSVQTMIEIQEFISFISRQGNLSSQAPLKRLLKSWTNRYPDARMDPVHIWDDIITNRCFFLSKIEEKLTLPLGDHSLSMDEERDSSDKMEVQEQGEEVCSLIKNCMFSMKMKMVESARKQHNFSLAMKLLKELRRESKTRDDWQVKWVHTYCRLSHSRIQGQSCLQQILSALKTVSLLAGESTSSYFSKNVLAFHDQNILLGTTYSIIANALRREPACLAEIEESRARRILDLSGSSLENAEKVIAVLYQRAFHHLSEAVRTAEEEAQPSLRGQGPVASLTDAYMTLADFCDQQLRKEEESASVTESVELQTYPGLVVDNMLKALKLHSSEARLKFPRLLQIIELYPEETLSLMTKEISSTPCWQFIGWISHMVALLDQEEAVAVQCTVEEIADNYPQAIVYPFIISSESYSFKDTSTGHKNKEFVARIKTKLDLGGVIQDFISALEQLSNPEMLFKDWTDDMKAELAKNPVSKKNIEKMYERMYAALGDLRAPGLGAFRRRFIQVFGKEFDKHFGKGGSKLPGMKLRDFGSITDSLFYKMCTDSKPPGNLKECSPWMSDFKVEFLRNELEIPGQYDGKGKPLPEYHARIAGFDERIKVMASIRKPKRIIIRGRDEKEYPLLVKGGEDLRQDQRIEQLFEVMNVLLSQDTACSQRNMQLKTYHVIPMTSRLGLIEWIENTLTLKDFLLSNMSREEKAAYTSDPKAPPCEYRDWLAKMSGKYDVGAYMSMFKAASRTETVTSFRRRESRVPADLLKRAFLKMSTGPAAFLALRSHFASSHALMCISHWILGIGDRHLNNFMVSMETGGLIGIDFGHAFGSATQFLPVPELMPFRLTRQFINLMLPMKEAGVVYSIMVHALRAFRSHSDLLTNTMDVFVKEPSFDWKNFEQKMLKKGGSWIQEINVTEKNWYPRQKIHYAKRKLAGANPAVITCDELFLGHEKALAFGDYVAVARGSKDHNIRAQQPENGLSEEAQVKCLIDQATDPNILGRTWIGWEPWM.

Lys127 bears the N6-acetyllysine mark. The stretch at 298–333 (DNYVSLFEVLSKWCSHTNVEMKKAAHSALESFLKQV) is one HEAT 1 repeat. 3 positions are modified to phosphoserine: Ser521, Ser851, and Ser903. The stretch at 1014–1050 (QDTVALLETILDGIVDPVDSTLRDFCGRCIREFLKWS) is one HEAT 2 repeat. Residue Ser1075 is modified to Phosphoserine. Lys1219 bears the N6-acetyllysine mark. An interaction with C1D region spans residues 1516–1551 (LDPSCKRLASGLLELAFAFGGLCEHLVDLLLDTAVL). The leucine-zipper stretch occupies residues 1516 to 1551 (LDPSCKRLASGLLELAFAFGGLCEHLVDLLLDTAVL). Residues 1736 to 1769 (PMKSEEFPVGTLRYSNYVDCMKKFLDALELSQSP) form a TPR 1 repeat. An N6-acetyllysine modification is found at Lys1983. Phosphoserine; by autocatalysis is present on Ser2069. Lys2271 is modified (N6-acetyllysine). The KIP-binding stretch occupies residues 2448-3228 (LDIIYKMMAK…DHSLSMDEER (781 aa)). Thr2547 is subject to Phosphothreonine. Phosphothreonine; by autocatalysis is present on Thr2621. Residue Ser2624 is modified to Phosphoserine; by autocatalysis. Phosphothreonine; by autocatalysis is present on residues Thr2650 and Thr2659. A disordered region spans residues 2697-2729 (AQKRNEKSQRAPLKSVGPDFGEKKLGLPGDKVD). Basic and acidic residues predominate over residues 2716–2729 (FGEKKLGLPGDKVD). Positions 2753–2781 (EKLSLIYARKGIAEQKREKEIKSELKMKH) are may split the end of the DNA molecule, with the two strands separating around the region. Ser2805 carries the phosphoserine modification. TPR repeat units lie at residues 2903 to 2935 (PVGV…VSPD), 2936 to 2964 (VVRW…SEIG), and 2965 to 2998 (TKQI…EEWV). In terms of domain architecture, FAT spans 2922-3555 (PAKQFKGRMR…VYPFIISSES (634 aa)). Phosphoserine is present on Ser3221. Residues Lys3257, Lys3276, Lys3654, and Lys3658 each carry the N6-acetyllysine modification. A TPR 5 repeat occupies 3711–3748 (LRNELEIPGQYDGKGKPLPEYHARIAGFDERIKVMASI). The PI3K/PI4K catalytic domain occupies 3738-4069 (FDERIKVMAS…IHYAKRKLAG (332 aa)). The tract at residues 3744–3750 (VMASIRK) is G-loop. A phosphoserine mark is found at Ser3747 and Ser3837. The segment at 3935–3943 (GIGDRHLNN) is catalytic loop. Residues 3955-3980 (GIDFGHAFGSATQFLPVPELMPFRLT) form an activation loop region. Residue Ser4042 is modified to Phosphoserine. The FATC domain occupies 4112–4144 (NGLSEEAQVKCLIDQATDPNILGRTWIGWEPWM).

Belongs to the PI3/PI4-kinase family. As to quaternary structure, DNA-PK is a heterotrimer of PRKDC and the Ku dimer (composed of XRCC6/Ku70 and XRCC5/Ku86). Formation of this complex may be promoted by interaction with ILF3. Component of the core long-range non-homologous end joining (NHEJ) complex (also named DNA-PK complex) composed of PRKDC, LIG4, XRCC4, XRCC6/Ku70, XRCC5/Ku86 and NHEJ1/XLF. Additional component of the NHEJ complex includes PAXX. Following autophosphorylation, PRKDC dissociates from DNA. Interacts with DNA-PKcs-interacting protein (KIP) with the region upstream the kinase domain. PRKDC alone also interacts with and phosphorylates DCLRE1C, thereby activating the latent endonuclease activity of this protein. Interacts with C1D. Interacts with TTI1 and TELO2. Interacts with CIB1. Interacts with SETX. Interacts with NR4A3; the DNA-dependent protein kinase complex DNA-PK phosphorylates and activates NR4A3 and prevents NR4A3 ubiquitination and degradation. Interacts with BRAT1. Part of the HDP-RNP complex composed of at least HEXIM1, PRKDC, XRCC5, XRCC6, paraspeckle proteins (SFPQ, NONO, PSPC1, RBM14, and MATR3) and NEAT1 RNA. Interacts with KAT5. In terms of processing, autophosphorylated at two clusters, the T2609 cluster and the S2056 cluster. Autophosphorylated on Ser-2069, Thr-2621, Thr-2650 and Thr-2659. Ser-2069 and Thr-2621 are DNA damage-inducible phosphorylation sites (inducible with ionizing radiation, IR) dephosphorylated by PPP5C. Autophosphorylation induces a conformational change that leads to remodeling of the DNA-PK complex, requisite for efficient end processing and DNA repair. Autophosphorylation in trans within DNA-PK complexes loaded on DNA ends leads to the dissociation of PRKDC from DNA and the transition into the short-range NHEJ complex. Autophosphorylation of the T2609 cluster is required for hematopoietic development and protein synthesis in erythrocytes precursors. S-nitrosylated by GAPDH. Post-translationally, polyubiquitinated by RNF144A, leading to proteasomal degradation.

It localises to the nucleus. The protein resides in the nucleolus. Its subcellular location is the cytoplasm. It is found in the cytosol. It catalyses the reaction L-seryl-[protein] + ATP = O-phospho-L-seryl-[protein] + ADP + H(+). It carries out the reaction L-threonyl-[protein] + ATP = O-phospho-L-threonyl-[protein] + ADP + H(+). Activity seems to be attenuated by autophosphorylation. Binding to the SL1 region of U3 small nucleolar RNA promotes auto-phosphorylation activity. Inhibited by wortmannin. Serine/threonine-protein kinase that acts as a molecular sensor for DNA damage. Involved in DNA non-homologous end joining (NHEJ) required for double-strand break (DSB) repair and V(D)J recombination. Must be bound to DNA to express its catalytic properties. Promotes processing of hairpin DNA structures in V(D)J recombination by activation of the hairpin endonuclease artemis (DCLRE1C). Recruited by XRCC5 and XRCC6 to DNA ends and is required to (1) protect and align broken ends of DNA, thereby preventing their degradation, (2) and sequester the DSB for repair by NHEJ. Acts as a scaffold protein to aid the localization of DNA repair proteins to the site of damage. The assembly of the DNA-PK complex at DNA ends is also required for the NHEJ ligation step. Found at the ends of chromosomes, suggesting a further role in the maintenance of telomeric stability and the prevention of chromosomal end fusion. Also involved in modulation of transcription. As part of the DNA-PK complex, involved in the early steps of ribosome assembly by promoting the processing of precursor rRNA into mature 18S rRNA in the small-subunit processome. Binding to U3 small nucleolar RNA, recruits PRKDC and XRCC5/Ku86 to the small-subunit processome. Recognizes the substrate consensus sequence [ST]-Q. Phosphorylates 'Ser-139' of histone variant H2AX, thereby regulating DNA damage response mechanism. Phosphorylates ASF1A, DCLRE1C, c-Abl/ABL1, histone H1, HSPCA, c-jun/JUN, p53/TP53, PARP1, POU2F1, DHX9, FH, SRF, NHEJ1/XLF, XRCC1, XRCC4, XRCC5, XRCC6, WRN, MYC and RFA2. Can phosphorylate C1D not only in the presence of linear DNA but also in the presence of supercoiled DNA. Ability to phosphorylate p53/TP53 in the presence of supercoiled DNA is dependent on C1D. Acts as a regulator of the phosphatidylinositol 3-kinase/protein kinase B signal transduction by mediating phosphorylation of 'Ser-473' of protein kinase B (PKB/AKT1, PKB/AKT2, PKB/AKT3), promoting their activation. Contributes to the determination of the circadian period length by antagonizing phosphorylation of CRY1 'Ser-588' and increasing CRY1 protein stability, most likely through an indirect mechanism. Plays a role in the regulation of DNA virus-mediated innate immune response by assembling into the HDP-RNP complex, a complex that serves as a platform for IRF3 phosphorylation and subsequent innate immune response activation through the cGAS-STING pathway. Also regulates the cGAS-STING pathway by catalyzing phosphorylation of CGAS, thereby impairing CGAS oligomerization and activation. Also regulates the cGAS-STING pathway by mediating phosphorylation of PARP1. In Canis lupus familiaris (Dog), this protein is DNA-dependent protein kinase catalytic subunit (PRKDC).